Consider the following 197-residue polypeptide: Small ribosomal subunit protein uS4B (197 aa).

An S4 RNA-binding domain is found at 88 to 151 (CRLDNIAYRI…RKNDEFADNF (64 aa)).

This sequence belongs to the universal ribosomal protein uS4 family. In terms of assembly, part of the 30S ribosomal subunit. Contacts protein S5. The interaction surface between S4 and S5 is involved in control of translational fidelity.

Functionally, one of the primary rRNA binding proteins, it binds directly to 16S rRNA where it nucleates assembly of the body of the 30S subunit. With S5 and S12 plays an important role in translational accuracy. The sequence is that of Small ribosomal subunit protein uS4B from Clostridium botulinum (strain Hall / ATCC 3502 / NCTC 13319 / Type A).